The chain runs to 233 residues: UPF0758 protein RoseRS_0767 (233 aa).

In terms of domain architecture, MPN spans 107–229; the sequence is LIRSPTDAAQ…FVSMRERGLG (123 aa). Positions 178, 180, and 191 each coordinate Zn(2+). Positions 178-191 match the JAMM motif motif; it reads HNHPSGDPTPSPED.

This sequence belongs to the UPF0758 family.

The polypeptide is UPF0758 protein RoseRS_0767 (Roseiflexus sp. (strain RS-1)).